A 359-amino-acid polypeptide reads, in one-letter code: UDP-3-O-acylglucosamine N-acyltransferase (359 aa).

His-256 acts as the Proton acceptor in catalysis.

This sequence belongs to the transferase hexapeptide repeat family. LpxD subfamily. As to quaternary structure, homotrimer.

It catalyses the reaction a UDP-3-O-[(3R)-3-hydroxyacyl]-alpha-D-glucosamine + a (3R)-hydroxyacyl-[ACP] = a UDP-2-N,3-O-bis[(3R)-3-hydroxyacyl]-alpha-D-glucosamine + holo-[ACP] + H(+). The protein operates within bacterial outer membrane biogenesis; LPS lipid A biosynthesis. In terms of biological role, catalyzes the N-acylation of UDP-3-O-acylglucosamine using 3-hydroxyacyl-ACP as the acyl donor. Is involved in the biosynthesis of lipid A, a phosphorylated glycolipid that anchors the lipopolysaccharide to the outer membrane of the cell. This Rhodopseudomonas palustris (strain HaA2) protein is UDP-3-O-acylglucosamine N-acyltransferase.